The following is a 1375-amino-acid chain: Patatin-like phospholipase domain-containing protein 6 (1375 aa).

A disordered region spans residues 1-20 (MEAPLQTGMMGTSSHGLATN). Residues 1–59 (MEAPLQTGMMGTSSHGLATNSSGAKVAERDGFQDVLAPGEGSAGRICGAQPVPFVPQVL) lie on the Lumenal side of the membrane. The span at 9–20 (MMGTSSHGLATN) shows a compositional bias: polar residues. The N-linked (GlcNAc...) asparagine glycan is linked to N20. The helical transmembrane segment at 60 to 80 (GVMIGAGVAVVVTAVLILLVV) threads the bilayer. Over 81 to 1375 (RRLRVPKTPA…QEPPGSATDA (1295 aa)) the chain is Cytoplasmic. 195–322 (VLGHFEKPLF…VRVVQIIMVR (128 aa)) is an a nucleoside 3',5'-cyclic phosphate binding site. Disordered regions lie at residues 352 to 436 (FPSP…RSDF) and 449 to 472 (LQEE…PREQ). Position 354 is a phosphoserine (S354). The segment covering 359–376 (TRTSPVRGSKRMVSTSAT) has biased composition (polar residues). Position 361 is a phosphothreonine (T361). A phosphoserine mark is found at S362 and S372. The span at 384–398 (GRPPDPTGAPLPGPT) shows a compositional bias: pro residues. S420 bears the Phosphoserine mark. T464 is subject to Phosphothreonine. A nucleoside 3',5'-cyclic phosphate contacts are provided by residues 511–633 (ELAK…VAAR) and 629–749 (TVAA…LSQK). The PNPLA domain maps to 981–1147 (LVLGGGGARG…INNLPADIAR (167 aa)). Positions 985 to 990 (GGGARG) match the GXGXXG motif. The GXSXG signature appears at 1012–1016 (GTSIG). S1014 serves as the catalytic Nucleophile. The active-site Proton acceptor is D1134. Positions 1134–1136 (DGG) match the DGA/G motif. Residues 1306-1375 (SYVSDGCADG…QEPPGSATDA (70 aa)) form a disordered region. Residues 1313 to 1329 (ADGEESDCLTEYEEDAG) are compositionally biased toward acidic residues.

The protein belongs to the NTE family. Glycosylated. Expressed in brain, placenta, kidney, neuron and skeletal muscle. Expressed in the developing eye, pituitary and brain.

It localises to the endoplasmic reticulum membrane. The enzyme catalyses a 1-acyl-sn-glycero-3-phosphocholine + H2O = sn-glycerol 3-phosphocholine + a fatty acid + H(+). It carries out the reaction 1-(9Z-octadecenoyl)-sn-glycero-3-phosphocholine + H2O = sn-glycerol 3-phosphocholine + (9Z)-octadecenoate + H(+). The catalysed reaction is 1-hexadecanoylglycerol + H2O = glycerol + hexadecanoate + H(+). It catalyses the reaction 2-hexadecanoylglycerol + H2O = glycerol + hexadecanoate + H(+). The enzyme catalyses 1-(9Z-octadecenoyl)-glycerol + H2O = glycerol + (9Z)-octadecenoate + H(+). It carries out the reaction 2-(9Z-octadecenoyl)-glycerol + H2O = glycerol + (9Z)-octadecenoate + H(+). The catalysed reaction is 2-(5Z,8Z,11Z,14Z-eicosatetraenoyl)-glycerol + H2O = glycerol + (5Z,8Z,11Z,14Z)-eicosatetraenoate + H(+). It catalyses the reaction 1-hexadecanoyl-sn-glycero-3-phosphate + H2O = sn-glycerol 3-phosphate + hexadecanoate + H(+). The enzyme catalyses 1-hexadecanoyl-sn-glycero-3-phosphocholine + H2O = sn-glycerol 3-phosphocholine + hexadecanoate + H(+). Inhibited by a series a OPs such as mipafox (MPX), phenyl saligenin phosphate (PSP), phenyl dipentyl phosphinate (PDPP), diisopropyl fluorophosphate and paraoxon. Functionally, phospholipase B that deacylates intracellular phosphatidylcholine (PtdCho), generating glycerophosphocholine (GroPtdCho). This deacylation occurs at both sn-2 and sn-1 positions of PtdCho. Catalyzes the hydrolysis of several naturally occurring membrane-associated lipids. Hydrolyzes lysophospholipids and monoacylglycerols, preferring the 1-acyl to the 2-acyl isomer. Does not catalyze hydrolysis of di- or triacylglycerols or fatty acid amides. The chain is Patatin-like phospholipase domain-containing protein 6 from Homo sapiens (Human).